The sequence spans 476 residues: 1-aminocyclopropane-1-carboxylate synthase 4 (476 aa).

Residue lysine 282 is modified to N6-(pyridoxal phosphate)lysine.

This sequence belongs to the class-I pyridoxal-phosphate-dependent aminotransferase family. In terms of assembly, homodimer. Requires pyridoxal 5'-phosphate as cofactor.

The enzyme catalyses S-adenosyl-L-methionine = 1-aminocyclopropane-1-carboxylate + S-methyl-5'-thioadenosine + H(+). Its pathway is alkene biosynthesis; ethylene biosynthesis via S-adenosyl-L-methionine; ethylene from S-adenosyl-L-methionine: step 1/2. Its function is as follows. Catalyzes the formation of 1-aminocyclopropane-1-carboxylate, a direct precursor of ethylene in higher plants. The sequence is that of 1-aminocyclopropane-1-carboxylate synthase 4 (ACS4) from Solanum lycopersicum (Tomato).